Consider the following 399-residue polypeptide: Nicotinate phosphoribosyltransferase (399 aa).

H224 carries the phosphohistidine; by autocatalysis modification.

Belongs to the NAPRTase family. In terms of processing, transiently phosphorylated on a His residue during the reaction cycle. Phosphorylation strongly increases the affinity for substrates and increases the rate of nicotinate D-ribonucleotide production. Dephosphorylation regenerates the low-affinity form of the enzyme, leading to product release.

It carries out the reaction nicotinate + 5-phospho-alpha-D-ribose 1-diphosphate + ATP + H2O = nicotinate beta-D-ribonucleotide + ADP + phosphate + diphosphate. The protein operates within cofactor biosynthesis; NAD(+) biosynthesis; nicotinate D-ribonucleotide from nicotinate: step 1/1. Its function is as follows. Catalyzes the synthesis of beta-nicotinate D-ribonucleotide from nicotinate and 5-phospho-D-ribose 1-phosphate at the expense of ATP. This Ectopseudomonas mendocina (strain ymp) (Pseudomonas mendocina) protein is Nicotinate phosphoribosyltransferase.